Consider the following 377-residue polypeptide: UPF0754 membrane protein lin2327 (377 aa).

2 helical membrane-spanning segments follow: residues 1 to 21 (MSVL…GAMT) and 357 to 377 (YLGG…AMWI).

The protein belongs to the UPF0754 family.

The protein resides in the cell membrane. This Listeria innocua serovar 6a (strain ATCC BAA-680 / CLIP 11262) protein is UPF0754 membrane protein lin2327.